A 267-amino-acid polypeptide reads, in one-letter code: Phosphonoacetaldehyde hydrolase (267 aa).

Residue D10 is the Nucleophile of the active site. Mg(2+)-binding residues include D10 and A12. Catalysis depends on K51, which acts as the Schiff-base intermediate with substrate. D184 contacts Mg(2+).

This sequence belongs to the HAD-like hydrolase superfamily. PhnX family. In terms of assembly, homodimer. The cofactor is Mg(2+).

The enzyme catalyses phosphonoacetaldehyde + H2O = acetaldehyde + phosphate + H(+). Functionally, involved in phosphonate degradation. This chain is Phosphonoacetaldehyde hydrolase, found in Paraburkholderia xenovorans (strain LB400).